A 430-amino-acid polypeptide reads, in one-letter code: MIOREX complex component 4 (430 aa).

A mitochondrion-targeting transit peptide spans 1–27; sequence MTVLYTSASLKKMKCLAFNMGMNCVRT. A helical transmembrane segment spans residues 403-420; the sequence is FLISLSALLASFFAYYRY.

In terms of assembly, associates with the mitochondrial ribosome.

The protein resides in the mitochondrion. It localises to the mitochondrion membrane. Functionally, component of MIOREX complexes, large expressome-like assemblies of ribosomes with factors involved in all the steps of post-transcriptional gene expression. The protein is MIOREX complex component 4 of Saccharomyces cerevisiae (strain ATCC 204508 / S288c) (Baker's yeast).